Here is a 475-residue protein sequence, read N- to C-terminus: Ankyrin repeat, SAM and basic leucine zipper domain-containing protein 1 (475 aa).

The interval methionine 1 to aspartate 22 is disordered. Residues serine 17, serine 18, and serine 20 each carry the phosphoserine modification. 6 ANK repeats span residues glutamate 45–serine 74, tyrosine 78–phenylalanine 107, aspartate 110–valine 144, arginine 148–threonine 177, asparagine 181–leucine 210, and aspartate 214–glycine 243. In terms of domain architecture, SAM spans serine 272 to glutamine 334.

In terms of assembly, interacts with DDX4, PIWIL1, RANBP9 and TDRD1.

It is found in the cytoplasm. Its function is as follows. Plays a central role during spermatogenesis by repressing transposable elements and preventing their mobilization, which is essential for the germline integrity. Acts via the piRNA metabolic process, which mediates the repression of transposable elements during meiosis by forming complexes composed of piRNAs and Piwi proteins and governs the methylation and subsequent repression of transposons. Its association with pi-bodies suggests a participation in the primary piRNAs metabolic process. Required prior to the pachytene stage to facilitate the production of multiple types of piRNAs, including those associated with repeats involved in the regulation of retrotransposons. May act by mediating protein-protein interactions during germ cell maturation. The polypeptide is Ankyrin repeat, SAM and basic leucine zipper domain-containing protein 1 (ASZ1) (Colobus guereza (Mantled guereza)).